Consider the following 371-residue polypeptide: GPI mannosyltransferase 1 (371 aa).

8 consecutive transmembrane segments (helical) span residues 64-84 (FPSW…WLMI), 120-140 (AILG…SVWL), 144-164 (ILGF…AFLV), 190-210 (IVVG…YLYG), 248-268 (ASSL…PLVF), 290-310 (VCTS…LPNS), 318-338 (LICL…AYNL), and 344-364 (SVFI…VYEL).

It belongs to the PIGM family.

It localises to the endoplasmic reticulum membrane. Its pathway is glycolipid biosynthesis; glycosylphosphatidylinositol-anchor biosynthesis. Mannosyltransferase involved in glycosylphosphatidylinositol-anchor biosynthesis. Transfers the first alpha-1,4-mannose to GlcN-acyl-PI during GPI precursor assembly. Required for cell wall integrity. The sequence is that of GPI mannosyltransferase 1 (gpi14) from Schizosaccharomyces pombe (strain 972 / ATCC 24843) (Fission yeast).